Here is a 206-residue protein sequence, read N- to C-terminus: Thiamine-phosphate synthase (206 aa).

4-amino-2-methyl-5-(diphosphooxymethyl)pyrimidine-binding positions include 37–41 (QYRNK) and N69. Mg(2+) is bound by residues D70 and D89. Residue S108 participates in 4-amino-2-methyl-5-(diphosphooxymethyl)pyrimidine binding. 135-137 (SST) lines the 2-[(2R,5Z)-2-carboxy-4-methylthiazol-5(2H)-ylidene]ethyl phosphate pocket. K138 contacts 4-amino-2-methyl-5-(diphosphooxymethyl)pyrimidine. Residues G165 and 185–186 (IS) each bind 2-[(2R,5Z)-2-carboxy-4-methylthiazol-5(2H)-ylidene]ethyl phosphate.

Belongs to the thiamine-phosphate synthase family. It depends on Mg(2+) as a cofactor.

It catalyses the reaction 2-[(2R,5Z)-2-carboxy-4-methylthiazol-5(2H)-ylidene]ethyl phosphate + 4-amino-2-methyl-5-(diphosphooxymethyl)pyrimidine + 2 H(+) = thiamine phosphate + CO2 + diphosphate. It carries out the reaction 2-(2-carboxy-4-methylthiazol-5-yl)ethyl phosphate + 4-amino-2-methyl-5-(diphosphooxymethyl)pyrimidine + 2 H(+) = thiamine phosphate + CO2 + diphosphate. The catalysed reaction is 4-methyl-5-(2-phosphooxyethyl)-thiazole + 4-amino-2-methyl-5-(diphosphooxymethyl)pyrimidine + H(+) = thiamine phosphate + diphosphate. It participates in cofactor biosynthesis; thiamine diphosphate biosynthesis; thiamine phosphate from 4-amino-2-methyl-5-diphosphomethylpyrimidine and 4-methyl-5-(2-phosphoethyl)-thiazole: step 1/1. Functionally, condenses 4-methyl-5-(beta-hydroxyethyl)thiazole monophosphate (THZ-P) and 2-methyl-4-amino-5-hydroxymethyl pyrimidine pyrophosphate (HMP-PP) to form thiamine monophosphate (TMP). This chain is Thiamine-phosphate synthase, found in Azoarcus sp. (strain BH72).